Here is a 144-residue protein sequence, read N- to C-terminus: Large ribosomal subunit protein uL13 (144 aa).

Belongs to the universal ribosomal protein uL13 family. In terms of assembly, part of the 50S ribosomal subunit.

Functionally, this protein is one of the early assembly proteins of the 50S ribosomal subunit, although it is not seen to bind rRNA by itself. It is important during the early stages of 50S assembly. In Clostridium perfringens (strain ATCC 13124 / DSM 756 / JCM 1290 / NCIMB 6125 / NCTC 8237 / Type A), this protein is Large ribosomal subunit protein uL13.